Reading from the N-terminus, the 212-residue chain is Adenylate kinase (212 aa).

ATP is bound at residue 10-15; the sequence is GAGKGT. The interval 30–59 is NMP; the sequence is AIGDIFRTIIKTSTSEAELINNYVRQGELI. AMP contacts are provided by residues R36, 57 to 59, 85 to 88, and Q92; these read ELI and GYPR. An LID region spans residues 122–160; the sequence is GRYSCKNCGKIYNRYFLQPKTDNVCDVCGSSTFDYRKDD. R123 contacts ATP. Residues C126 and C129 each coordinate Zn(2+). 132 to 133 contributes to the ATP binding site; that stretch reads IY. Residues C146 and C149 each contribute to the Zn(2+) site. AMP is bound by residues R157 and R168. K196 is an ATP binding site.

The protein belongs to the adenylate kinase family. Monomer.

Its subcellular location is the cytoplasm. It catalyses the reaction AMP + ATP = 2 ADP. The protein operates within purine metabolism; AMP biosynthesis via salvage pathway; AMP from ADP: step 1/1. Functionally, catalyzes the reversible transfer of the terminal phosphate group between ATP and AMP. Plays an important role in cellular energy homeostasis and in adenine nucleotide metabolism. This is Adenylate kinase from Rickettsia rickettsii (strain Iowa).